Consider the following 144-residue polypeptide: Maximins 2/H8 type 1 (144 aa).

Positions 1–18 are cleaved as a signal peptide; sequence MNFKYIVAVSFLIASAYA. A propeptide spanning residues 19 to 43 is cleaved from the precursor; sequence RSEENEIQSLSQRDVLEEESLREMR. At asparagine 70 the chain carries Asparagine amide. Positions 74 to 123 are excised as a propeptide; it reads TAEEHEVMKRLETVMRDLDSLDYPEEASERETRGFNQEEIANLFTKKEKR. Isoleucine 143 bears the Isoleucine amide mark.

This sequence belongs to the bombinin family. Expressed by the skin glands.

It localises to the secreted. Maximin-2 shows antibacterial activity against both Gram-positive and Gram-negative bacteria. It also shows antimicrobial activity against the fungus C.albicans, but not against A.flavus nor P.uticale. It has little hemolytic activity. Its function is as follows. Maximin-H8 shows antimicrobial activity against bacteria and against the fungus C.albicans. Shows strong hemolytic activity. This Bombina maxima (Giant fire-bellied toad) protein is Maximins 2/H8 type 1.